The following is a 212-amino-acid chain: Pyrrolidone-carboxylate peptidase (212 aa).

Catalysis depends on residues E78, C141, and H165.

The protein belongs to the peptidase C15 family. In terms of assembly, homotetramer.

Its subcellular location is the cytoplasm. It catalyses the reaction Release of an N-terminal pyroglutamyl group from a polypeptide, the second amino acid generally not being Pro.. Removes 5-oxoproline from various penultimate amino acid residues except L-proline. This Staphylococcus aureus (strain bovine RF122 / ET3-1) protein is Pyrrolidone-carboxylate peptidase.